We begin with the raw amino-acid sequence, 243 residues long: CTD nuclear envelope phosphatase 1 homolog (243 aa).

Residues 11–27 (ALLLLLSKVWTCICFMF) form a helical membrane-spanning segment. The region spanning 56–223 (SLVQRKTLVL…LSLLPMLDAL (168 aa)) is the FCP1 homology domain.

The protein belongs to the dullard family.

The protein localises to the membrane. The enzyme catalyses O-phospho-L-seryl-[protein] + H2O = L-seryl-[protein] + phosphate. It catalyses the reaction O-phospho-L-threonyl-[protein] + H2O = L-threonyl-[protein] + phosphate. In terms of biological role, serine/threonine protein phosphatase that may dephosphorylate and activate lipin-like phosphatases. Lipins are phosphatidate phosphatases that catalyze the conversion of phosphatidic acid to diacylglycerol and control the metabolism of fatty acids at different levels. May indirectly modulate the lipid composition of nuclear and/or endoplasmic reticulum membranes and be required for proper nuclear membrane morphology and/or dynamics. May also indirectly regulate the production of lipid droplets and triacylglycerol. This is CTD nuclear envelope phosphatase 1 homolog (l(1)G0269) from Drosophila pseudoobscura pseudoobscura (Fruit fly).